Here is a 154-residue protein sequence, read N- to C-terminus: 6,7-dimethyl-8-ribityllumazine synthase (154 aa).

5-amino-6-(D-ribitylamino)uracil is bound by residues Phe22, 57-59 (AYE), and 81-83 (AVI). 86–87 (GT) contacts (2S)-2-hydroxy-3-oxobutyl phosphate. His89 serves as the catalytic Proton donor. 5-amino-6-(D-ribitylamino)uracil is bound at residue Phe114. Arg128 provides a ligand contact to (2S)-2-hydroxy-3-oxobutyl phosphate.

The protein belongs to the DMRL synthase family. Forms an icosahedral capsid composed of 60 subunits, arranged as a dodecamer of pentamers.

It carries out the reaction (2S)-2-hydroxy-3-oxobutyl phosphate + 5-amino-6-(D-ribitylamino)uracil = 6,7-dimethyl-8-(1-D-ribityl)lumazine + phosphate + 2 H2O + H(+). The protein operates within cofactor biosynthesis; riboflavin biosynthesis; riboflavin from 2-hydroxy-3-oxobutyl phosphate and 5-amino-6-(D-ribitylamino)uracil: step 1/2. Functionally, catalyzes the formation of 6,7-dimethyl-8-ribityllumazine by condensation of 5-amino-6-(D-ribitylamino)uracil with 3,4-dihydroxy-2-butanone 4-phosphate. This is the penultimate step in the biosynthesis of riboflavin. The chain is 6,7-dimethyl-8-ribityllumazine synthase from Idiomarina loihiensis (strain ATCC BAA-735 / DSM 15497 / L2-TR).